Consider the following 394-residue polypeptide: NAD(P)H-quinone oxidoreductase subunit H (394 aa).

It belongs to the complex I 49 kDa subunit family. NDH-1 can be composed of about 15 different subunits; different subcomplexes with different compositions have been identified which probably have different functions.

Its subcellular location is the cellular thylakoid membrane. The catalysed reaction is a plastoquinone + NADH + (n+1) H(+)(in) = a plastoquinol + NAD(+) + n H(+)(out). It carries out the reaction a plastoquinone + NADPH + (n+1) H(+)(in) = a plastoquinol + NADP(+) + n H(+)(out). Functionally, NDH-1 shuttles electrons from an unknown electron donor, via FMN and iron-sulfur (Fe-S) centers, to quinones in the respiratory and/or the photosynthetic chain. The immediate electron acceptor for the enzyme in this species is believed to be plastoquinone. Couples the redox reaction to proton translocation, and thus conserves the redox energy in a proton gradient. Cyanobacterial NDH-1 also plays a role in inorganic carbon-concentration. The chain is NAD(P)H-quinone oxidoreductase subunit H from Prochlorococcus marinus (strain NATL1A).